We begin with the raw amino-acid sequence, 459 residues long: ATP-dependent protease ATPase subunit HslU (459 aa).

ATP contacts are provided by residues valine 18, glycine 60–glutamate 65, aspartate 272, glutamate 337, and arginine 409.

Belongs to the ClpX chaperone family. HslU subfamily. A double ring-shaped homohexamer of HslV is capped on each side by a ring-shaped HslU homohexamer. The assembly of the HslU/HslV complex is dependent on binding of ATP.

The protein resides in the cytoplasm. In terms of biological role, ATPase subunit of a proteasome-like degradation complex; this subunit has chaperone activity. The binding of ATP and its subsequent hydrolysis by HslU are essential for unfolding of protein substrates subsequently hydrolyzed by HslV. HslU recognizes the N-terminal part of its protein substrates and unfolds these before they are guided to HslV for hydrolysis. The polypeptide is ATP-dependent protease ATPase subunit HslU (Thermoanaerobacter pseudethanolicus (strain ATCC 33223 / 39E) (Clostridium thermohydrosulfuricum)).